We begin with the raw amino-acid sequence, 134 residues long: 16 kDa beta-galactoside-binding lectin (134 aa).

Methionine 1 bears the N-acetylmethionine mark. Residues 4–134 enclose the Galectin domain; that stretch reads GLVVTQLDVQ…DFKVKAIKFS (131 aa). Residue 69–75 participates in a beta-D-galactoside binding; the sequence is WGEEDRK.

Homodimer. In terms of tissue distribution, mainly in the liver (adult), mainly in the muscle (embryo).

Its function is as follows. This protein binds beta-galactoside. Its physiological function is not yet known. It may be involved in the regulation of differentiation. In Gallus gallus (Chicken), this protein is 16 kDa beta-galactoside-binding lectin.